The sequence spans 239 residues: 1-(5-phosphoribosyl)-5-[(5-phosphoribosylamino)methylideneamino] imidazole-4-carboxamide isomerase (239 aa).

Asp8 serves as the catalytic Proton acceptor. Catalysis depends on Asp129, which acts as the Proton donor.

It belongs to the HisA/HisF family.

It is found in the cytoplasm. It catalyses the reaction 1-(5-phospho-beta-D-ribosyl)-5-[(5-phospho-beta-D-ribosylamino)methylideneamino]imidazole-4-carboxamide = 5-[(5-phospho-1-deoxy-D-ribulos-1-ylimino)methylamino]-1-(5-phospho-beta-D-ribosyl)imidazole-4-carboxamide. Its pathway is amino-acid biosynthesis; L-histidine biosynthesis; L-histidine from 5-phospho-alpha-D-ribose 1-diphosphate: step 4/9. The sequence is that of 1-(5-phosphoribosyl)-5-[(5-phosphoribosylamino)methylideneamino] imidazole-4-carboxamide isomerase from Bacillus cereus (strain B4264).